A 204-amino-acid chain; its full sequence is Imidazoleglycerol-phosphate dehydratase (204 aa).

The disordered stretch occupies residues 183–204 (DPRMDGITPSTKGTLSESGDSQ). Residues 190 to 204 (TPSTKGTLSESGDSQ) are compositionally biased toward polar residues.

Belongs to the imidazoleglycerol-phosphate dehydratase family.

The protein resides in the cytoplasm. It carries out the reaction D-erythro-1-(imidazol-4-yl)glycerol 3-phosphate = 3-(imidazol-4-yl)-2-oxopropyl phosphate + H2O. It functions in the pathway amino-acid biosynthesis; L-histidine biosynthesis; L-histidine from 5-phospho-alpha-D-ribose 1-diphosphate: step 6/9. The chain is Imidazoleglycerol-phosphate dehydratase from Alcanivorax borkumensis (strain ATCC 700651 / DSM 11573 / NCIMB 13689 / SK2).